A 277-amino-acid polypeptide reads, in one-letter code: Caspase-3 (277 aa).

M1 bears the N-acetylmethionine mark. 2 consecutive propeptides follow at residues 1–9 (MENNETSVD) and 10–28 (AKSIKNLETQTIHGSKSMD). Position 11 is an N6-acetyllysine (K11). S26 is subject to Phosphoserine. Catalysis depends on residues H121 and C163. C163 is subject to S-nitrosocysteine; in inhibited form.

This sequence belongs to the peptidase C14A family. As to quaternary structure, heterotetramer that consists of two anti-parallel arranged heterodimers, each one formed by a 17 kDa (p17) and a 12 kDa (p12) subunit. Interacts with BIRC6/bruce. In terms of processing, cleavage by granzyme B, caspase-6, caspase-8 and caspase-10 generates the two active subunits. Additional processing of the propeptides is likely due to the autocatalytic activity of the activated protease. Active heterodimers between the small subunit of caspase-7 protease and the large subunit of caspase-3 also occur and vice versa. S-nitrosylated on its catalytic site cysteine in unstimulated cell lines and denitrosylated upon activation of the Fas apoptotic pathway, associated with an increase in intracellular caspase activity. Fas therefore activates caspase-3 not only by inducing the cleavage of the caspase zymogen to its active subunits, but also by stimulating the denitrosylation of its active site thiol. Post-translationally, ubiquitinated by BIRC6; this activity is inhibited by DIABLO/SMAC.

The protein localises to the cytoplasm. It catalyses the reaction Strict requirement for an Asp residue at positions P1 and P4. It has a preferred cleavage sequence of Asp-Xaa-Xaa-Asp-|- with a hydrophobic amino-acid residue at P2 and a hydrophilic amino-acid residue at P3, although Val or Ala are also accepted at this position.. Its activity is regulated as follows. Inhibited by BIRC6; following inhibition of BIRC6-caspase binding by DIABLO/SMAC, BIRC6 is subjected to caspase cleavage, leading to an increase in active caspases. Involved in the activation cascade of caspases responsible for apoptosis execution. At the onset of apoptosis, it proteolytically cleaves poly(ADP-ribose) polymerase PARP1 at a '216-Asp-|-Gly-217' bond. Cleaves and activates sterol regulatory element binding proteins (SREBPs) between the basic helix-loop-helix leucine zipper domain and the membrane attachment domain. Cleaves and activates caspase-6, -7 and -9 (CASP6, CASP7 and CASP9, respectively). Cleaves and inactivates interleukin-18 (IL18). Triggers cell adhesion in sympathetic neurons through RET cleavage. Cleaves IL-1 beta between an Asp and an Ala, releasing the mature cytokine which is involved in a variety of inflammatory processes. Cleaves and inhibits serine/threonine-protein kinase AKT1 in response to oxidative stress. Acts as an inhibitor of type I interferon production during virus-induced apoptosis by mediating cleavage of antiviral proteins CGAS, IRF3 and MAVS, thereby preventing cytokine overproduction. Also involved in pyroptosis by mediating cleavage and activation of gasdermin-E (GSDME). Cleaves XRCC4 and phospholipid scramblase proteins XKR4, XKR8 and XKR9, leading to promote phosphatidylserine exposure on apoptotic cell surface. Cleaves BIRC6 following inhibition of BIRC6-caspase binding by DIABLO/SMAC. This Oryctolagus cuniculus (Rabbit) protein is Caspase-3 (CASP3).